Here is a 604-residue protein sequence, read N- to C-terminus: Pescadillo homolog (604 aa).

The region spanning 349 to 448 is the BRCT domain; the sequence is PTSTLFSKFI…ELLPVNKYAP (100 aa). Disordered stretches follow at residues 452–562 and 579–604; these read LPPH…MTNK and TRTQELAKKKRKIEKTKAQLDKLSKK. Coiled-coil stretches lie at residues 468-522 and 573-604; these read EAEK…LEAA and GIDKKETRTQELAKKKRKIEKTKAQLDKLSKK. The span at 476–510 shows a compositional bias: acidic residues; that stretch reads ENAEEEEEDEVDEDDEDADEDEEDEEEEDEEEDED. Positions 593–604 are enriched in basic and acidic residues; it reads KTKAQLDKLSKK.

This sequence belongs to the pescadillo family. In terms of assembly, component of the NOP7 complex, composed of ERB1, NOP7 and YTM1. The complex is held together by ERB1, which interacts with NOP7 via its N-terminal domain and with YTM1 via a high-affinity interaction between the seven-bladed beta-propeller domains of the 2 proteins. The NOP7 complex associates with the 66S pre-ribosome.

Its subcellular location is the nucleus. The protein localises to the nucleolus. It localises to the nucleoplasm. Its function is as follows. Component of the NOP7 complex, which is required for maturation of the 25S and 5.8S ribosomal RNAs and formation of the 60S ribosome. The chain is Pescadillo homolog from Scheffersomyces stipitis (strain ATCC 58785 / CBS 6054 / NBRC 10063 / NRRL Y-11545) (Yeast).